A 196-amino-acid polypeptide reads, in one-letter code: Holliday junction branch migration complex subunit RuvA (196 aa).

The segment at 1-65 is domain I; sequence MIGYLRGKII…EDALQLFGFH (65 aa). The segment at 66-140 is domain II; the sequence is DKEEKNLFLS…GKLVSIEEGG (75 aa). Residues 140–144 are flexible linker; that stretch reads GVVAK. The tract at residues 145–196 is domain III; that stretch reads AKSVAHTQITSALLNLGYKSQLVDQFVSSLPADIAVEDGIRKGFQTLSGGLS.

The protein belongs to the RuvA family. In terms of assembly, homotetramer. Forms an RuvA(8)-RuvB(12)-Holliday junction (HJ) complex. HJ DNA is sandwiched between 2 RuvA tetramers; dsDNA enters through RuvA and exits via RuvB. An RuvB hexamer assembles on each DNA strand where it exits the tetramer. Each RuvB hexamer is contacted by two RuvA subunits (via domain III) on 2 adjacent RuvB subunits; this complex drives branch migration. In the full resolvosome a probable DNA-RuvA(4)-RuvB(12)-RuvC(2) complex forms which resolves the HJ.

Its subcellular location is the cytoplasm. In terms of biological role, the RuvA-RuvB-RuvC complex processes Holliday junction (HJ) DNA during genetic recombination and DNA repair, while the RuvA-RuvB complex plays an important role in the rescue of blocked DNA replication forks via replication fork reversal (RFR). RuvA specifically binds to HJ cruciform DNA, conferring on it an open structure. The RuvB hexamer acts as an ATP-dependent pump, pulling dsDNA into and through the RuvAB complex. HJ branch migration allows RuvC to scan DNA until it finds its consensus sequence, where it cleaves and resolves the cruciform DNA. In Bdellovibrio bacteriovorus (strain ATCC 15356 / DSM 50701 / NCIMB 9529 / HD100), this protein is Holliday junction branch migration complex subunit RuvA.